The primary structure comprises 72 residues: Translation initiation factor IF-1 (72 aa).

Residues 1-72 enclose the S1-like domain; that stretch reads MAKDDVIQMQ…SRARIVFRAK (72 aa).

This sequence belongs to the IF-1 family. In terms of assembly, component of the 30S ribosomal translation pre-initiation complex which assembles on the 30S ribosome in the order IF-2 and IF-3, IF-1 and N-formylmethionyl-tRNA(fMet); mRNA recruitment can occur at any time during PIC assembly.

It is found in the cytoplasm. Its function is as follows. One of the essential components for the initiation of protein synthesis. Stabilizes the binding of IF-2 and IF-3 on the 30S subunit to which N-formylmethionyl-tRNA(fMet) subsequently binds. Helps modulate mRNA selection, yielding the 30S pre-initiation complex (PIC). Upon addition of the 50S ribosomal subunit IF-1, IF-2 and IF-3 are released leaving the mature 70S translation initiation complex. In Burkholderia thailandensis (strain ATCC 700388 / DSM 13276 / CCUG 48851 / CIP 106301 / E264), this protein is Translation initiation factor IF-1.